Reading from the N-terminus, the 148-residue chain is DnaJ homolog subfamily C member 24 (148 aa).

A J domain is found at 10–81 (DWYSILGADP…ETKKKYDLQR (72 aa)). Positions 92–147 (VDAQVRLEEMSWNQGDESFFLSCRCGGKYTVSKDEAQEATLISCDACSLIVELLHQ) constitute a DPH-type MB domain. Zn(2+) contacts are provided by Cys-114, Cys-116, Cys-135, and Cys-138.

It belongs to the DPH4 family. As to quaternary structure, monomer and homooligomer. Iron binding promotes oligomerization. As to expression, detected in heart, brain, spleen, lung, liver, kidney and testis.

Its subcellular location is the cytoplasm. It localises to the cytoskeleton. Its pathway is protein modification; peptidyl-diphthamide biosynthesis. Functionally, the iron-bound form is redox-active and can function as electron carrier. Stimulates the ATPase activity of several Hsp70-type chaperones. This ability is enhanced by iron-binding. Plays a role in the diphthamide biosynthesis, a post-translational modification of histidine which occurs in translation elongation factor 2 (EEF2). This chain is DnaJ homolog subfamily C member 24 (Dnajc24), found in Mus musculus (Mouse).